A 388-amino-acid polypeptide reads, in one-letter code: Succinate--CoA ligase [ADP-forming] subunit beta (388 aa).

Residues 9–244 (KGVLSSFGVT…PDEYAAEELE (236 aa)) form the ATP-grasp domain. ATP-binding positions include lysine 46, 53-55 (GRG), glutamate 99, valine 102, and glutamate 107. Residues asparagine 199 and aspartate 213 each contribute to the Mg(2+) site. Substrate is bound by residues asparagine 264 and 320–322 (GIM).

This sequence belongs to the succinate/malate CoA ligase beta subunit family. As to quaternary structure, heterotetramer of two alpha and two beta subunits. It depends on Mg(2+) as a cofactor.

It carries out the reaction succinate + ATP + CoA = succinyl-CoA + ADP + phosphate. It catalyses the reaction GTP + succinate + CoA = succinyl-CoA + GDP + phosphate. Its pathway is carbohydrate metabolism; tricarboxylic acid cycle; succinate from succinyl-CoA (ligase route): step 1/1. In terms of biological role, succinyl-CoA synthetase functions in the citric acid cycle (TCA), coupling the hydrolysis of succinyl-CoA to the synthesis of either ATP or GTP and thus represents the only step of substrate-level phosphorylation in the TCA. The beta subunit provides nucleotide specificity of the enzyme and binds the substrate succinate, while the binding sites for coenzyme A and phosphate are found in the alpha subunit. The chain is Succinate--CoA ligase [ADP-forming] subunit beta from Anaplasma marginale (strain St. Maries).